The following is a 688-amino-acid chain: Ethylmalonyl-CoA mutase (688 aa).

The 130-residue stretch at 530–659 (TPRLVVGKPG…VGLAKVVERA (130 aa)) folds into the B12-binding domain. Residue His-543 coordinates adenosylcob(III)alamin. The disordered stretch occupies residues 666-688 (DRADTEAGVPGAPKRNESGAQVF).

Belongs to the methylmalonyl-CoA mutase family. The cofactor is adenosylcob(III)alamin.

The catalysed reaction is (2R)-ethylmalonyl-CoA = (2S)-methylsuccinyl-CoA. Functionally, radical enzyme that catalyzes the transformation of (2R)-ethylmalonyl-CoA to (2S)-methylsuccinyl-CoA. Is involved in the ethylmalonyl-CoA pathway for acetyl-CoA assimilation required for M.extorquens growth on one- and two-carbon compounds such as ethylamine, methanol or ethanol as sole carbon source. This enzyme acts as a regulatory metabolic control point in this pathway, that allows M.extorquens to efficiently restore metabolic balance when challenged with a sudden change in the growth substrate. In Methylorubrum extorquens (strain ATCC 14718 / DSM 1338 / JCM 2805 / NCIMB 9133 / AM1) (Methylobacterium extorquens), this protein is Ethylmalonyl-CoA mutase.